We begin with the raw amino-acid sequence, 326 residues long: NADH-quinone oxidoreductase subunit H (326 aa).

8 consecutive transmembrane segments (helical) span residues 11–31 (ILLSILKAVVILLVVVSCGAF), 81–101 (VIFTLAPMIAFTSLLLAFAIV), 114–134 (IGILFFLMMAGLGVYAVLFAG), 154–174 (LSYEVFLGLSLMGVVAQAGSF), 186–206 (LWNVIPQFFGFITFAIAGVAV), 237–257 (FFVGEYIGIVTVSALIVTLFF), 265–285 (LPPFIWFALKTAFFMMMFILI), and 302–322 (WKVCLPLTLINLLVTAAVILW).

The protein belongs to the complex I subunit 1 family. NDH-1 is composed of 13 different subunits. Subunits NuoA, H, J, K, L, M, N constitute the membrane sector of the complex.

It localises to the cell inner membrane. It catalyses the reaction a quinone + NADH + 5 H(+)(in) = a quinol + NAD(+) + 4 H(+)(out). In terms of biological role, NDH-1 shuttles electrons from NADH, via FMN and iron-sulfur (Fe-S) centers, to quinones in the respiratory chain. The immediate electron acceptor for the enzyme in this species is believed to be ubiquinone. Couples the redox reaction to proton translocation (for every two electrons transferred, four hydrogen ions are translocated across the cytoplasmic membrane), and thus conserves the redox energy in a proton gradient. This subunit may bind ubiquinone. This is NADH-quinone oxidoreductase subunit H from Cronobacter sakazakii (strain ATCC BAA-894) (Enterobacter sakazakii).